A 91-amino-acid chain; its full sequence is Small ribosomal subunit protein bS18 (91 aa).

Belongs to the bacterial ribosomal protein bS18 family. As to quaternary structure, part of the 30S ribosomal subunit. Forms a tight heterodimer with protein bS6.

Its function is as follows. Binds as a heterodimer with protein bS6 to the central domain of the 16S rRNA, where it helps stabilize the platform of the 30S subunit. The polypeptide is Small ribosomal subunit protein bS18 (Syntrophotalea carbinolica (strain DSM 2380 / NBRC 103641 / GraBd1) (Pelobacter carbinolicus)).